The primary structure comprises 375 residues: MFEISRLLHQPITMASPNRNNYSYQGIESYDSGRSRQNSDAMDIHVITAQEPPREPPDNNDPYDGHGGPAGTSHYSKPPNRWLFYEENGRTYHGYRRGVYPLPCDEQEQDRLDIFHKLFTVARMSESLIYAPHPPNGRFLDLGCGTGIWAIDVAHKYPNAFVAGVDLAPIQPPNHPDNCEFYAPFDFEAPWTLGENSWDLIHLQMGCGSVLGWQNLYKRILRHLQPGAWFEQVEIDFEPRCDDRSLNGLALREWYQYLKQATQDTMRPIAHSSRDTIRHLEEAGFTQIDHQMVGLPLNPWHRDEHEQKVARWYNLAISESIETLSLAPFSRIFHWDLDRIRQITAEVKSQAFNKEIHAYNILHIYQARKPGGPSL.

Residues 15 to 26 show a composition bias toward polar residues; sequence ASPNRNNYSYQG. Disordered stretches follow at residues 15–37 and 50–75; these read ASPNRNNYSYQGIESYDSGRSRQ and QEPPREPPDNNDPYDGHGGPAGTSHY.

Belongs to the methyltransferase superfamily. LaeA methyltransferase family. As to quaternary structure, component of the heterotrimeric velvet complex composed of laeA, veA and velB; VeA acting as a bridging protein between laeA and velB.

The protein resides in the nucleus. It carries out the reaction L-methionyl-[protein] + S-adenosyl-L-methionine = S-methyl-L-methionyl-[protein] + S-adenosyl-L-homocysteine. Its function is as follows. Methyltransferase that performs automethylation. No other methyl-accepting substrate has been identified yet. Component of the velvet transcription factor complex that acts as a global regulator for secondary metabolite gene expression. Controls the expression of the citric acid, demethylkotanin, orlandin, asperrubrol, tensidol B, atromentin and JBIR8 gene clusters. Also represses the expression of genes related to the production of BMS-192548 and aspernigrin A. The protein is Secondary metabolism regulator laeA of Aspergillus niger (strain ATCC 1015 / CBS 113.46 / FGSC A1144 / LSHB Ac4 / NCTC 3858a / NRRL 328 / USDA 3528.7).